The following is a 360-amino-acid chain: Flavin-dependent trigonelline monooxygenase, oxygenase component (360 aa).

The protein belongs to the bacterial luciferase oxidoreductase family. In terms of assembly, homodimer. The trigonelline monooxygenase is composed of a reductase component TgnA and an oxygenase component TgnB.

It carries out the reaction N-methylnicotinate + FMNH2 + O2 = (Z)-2-((N-methylformamido)methylene)-5-hydroxybutanolactone + FMN + H(+). It catalyses the reaction N-methylnicotinate + FADH2 + O2 = (Z)-2-((N-methylformamido)methylene)-5-hydroxybutanolactone + FAD + H(+). Its function is as follows. Involved in the degradation of the pyridine ring of trigonelline (TG; N-methylnicotinate) into succinate and methylamine as carbon and nitrogen sources, respectively. Catalyzes the insertion of two oxygens, followed by a ring cleavage of trigonelline to yield (Z)-2-((N-methylformamido)methylene)-5-hydroxybutyrolactone (MFMB). It is able to use reduced FMN or FAD. This chain is Flavin-dependent trigonelline monooxygenase, oxygenase component, found in Acinetobacter baylyi (strain ATCC 33305 / BD413 / ADP1).